Here is a 121-residue protein sequence, read N- to C-terminus: Large ribosomal subunit protein uL14 (121 aa).

The protein belongs to the universal ribosomal protein uL14 family. As to quaternary structure, part of the 50S ribosomal subunit. Forms a cluster with proteins L3 and L19. In the 70S ribosome, L14 and L19 interact and together make contacts with the 16S rRNA in bridges B5 and B8.

Its function is as follows. Binds to 23S rRNA. Forms part of two intersubunit bridges in the 70S ribosome. In Prochlorococcus marinus (strain MIT 9313), this protein is Large ribosomal subunit protein uL14.